Here is a 401-residue protein sequence, read N- to C-terminus: Putative hetero-Diels-Alderase asR5 (401 aa).

The first 21 residues, 1–21, serve as a signal peptide directing secretion; that stretch reads MRRSFLISAALGLSMSTPALA. Residues asparagine 71, asparagine 77, asparagine 240, and asparagine 334 are each glycosylated (N-linked (GlcNAc...) asparagine).

This sequence belongs to the eupF Diels-Alderase family.

It functions in the pathway secondary metabolite biosynthesis; terpenoid biosynthesis. In terms of biological role, putative hetero-Diels-Alderase; part of the gene cluster that mediates the biosynthesis of xenovulene A, an unusual meroterpenoid that has potent inhibitory effects on the human gamma-aminobutyrate A (GABAA) benzodiazepine receptor. The first step of xenovulene A biosynthesis is the biosynthesis of 3-methylorcinaldehyde performed by the non-reducing polyketide synthase aspks1. The salicylate hydroxylase asL1 then catalyzes the oxidative dearomatization of 3-methylorcinaldehyde to yield a dearomatized hydroxycyclohexadione. The 2-oxoglutarate-dependent dioxygenase asL3 further catalyzes the oxidative ring expansion to provide the first tropolone metabolite. The cytochrome P450 monooxygenase asR2 allows the synthesis of tropolone hemiacetal. In parallel, a previously unrecognised class of terpene cyclase, asR6, produces alpha-humulene from farnesylpyrophosphate (FPP). The putative Diels-Alderase asR5 probably catalyzes the formation of the tropolone-humulene skeleton by linking humulene and the polyketide moiety. Oxidative-ring contractions catalyzed by asL4 and asL6 then processively remove carbon atoms from the polyketide to yield xenovulene A. The sequence is that of Putative hetero-Diels-Alderase asR5 from Sarocladium schorii (Acremonium strictum (strain IMI 501407)).